The sequence spans 95 residues: Aspartyl/glutamyl-tRNA(Asn/Gln) amidotransferase subunit C (95 aa).

This sequence belongs to the GatC family. As to quaternary structure, heterotrimer of A, B and C subunits.

The enzyme catalyses L-glutamyl-tRNA(Gln) + L-glutamine + ATP + H2O = L-glutaminyl-tRNA(Gln) + L-glutamate + ADP + phosphate + H(+). It carries out the reaction L-aspartyl-tRNA(Asn) + L-glutamine + ATP + H2O = L-asparaginyl-tRNA(Asn) + L-glutamate + ADP + phosphate + 2 H(+). In terms of biological role, allows the formation of correctly charged Asn-tRNA(Asn) or Gln-tRNA(Gln) through the transamidation of misacylated Asp-tRNA(Asn) or Glu-tRNA(Gln) in organisms which lack either or both of asparaginyl-tRNA or glutaminyl-tRNA synthetases. The reaction takes place in the presence of glutamine and ATP through an activated phospho-Asp-tRNA(Asn) or phospho-Glu-tRNA(Gln). The polypeptide is Aspartyl/glutamyl-tRNA(Asn/Gln) amidotransferase subunit C (Hydrogenovibrio crunogenus (strain DSM 25203 / XCL-2) (Thiomicrospira crunogena)).